A 554-amino-acid chain; its full sequence is Thermosome subunit beta (554 aa).

The disordered stretch occupies residues 532–554 (GKKSGSEPSGKKEKDKEEKSSED). Over residues 540–554 (SGKKEKDKEEKSSED) the composition is skewed to basic and acidic residues.

It belongs to the TCP-1 chaperonin family. As to quaternary structure, forms a Heterooligomeric complex of two stacked eight-membered rings.

In terms of biological role, molecular chaperone; binds unfolded polypeptides in vitro, and has a weak ATPase activity. This Saccharolobus solfataricus (strain ATCC 35092 / DSM 1617 / JCM 11322 / P2) (Sulfolobus solfataricus) protein is Thermosome subunit beta (thsB).